The primary structure comprises 381 residues: 4-hydroxy-3-methylbut-2-en-1-yl diphosphate synthase (flavodoxin) (381 aa).

Cysteine 273, cysteine 276, cysteine 308, and glutamate 315 together coordinate [4Fe-4S] cluster.

Belongs to the IspG family. Requires [4Fe-4S] cluster as cofactor.

It carries out the reaction (2E)-4-hydroxy-3-methylbut-2-enyl diphosphate + oxidized [flavodoxin] + H2O + 2 H(+) = 2-C-methyl-D-erythritol 2,4-cyclic diphosphate + reduced [flavodoxin]. Its pathway is isoprenoid biosynthesis; isopentenyl diphosphate biosynthesis via DXP pathway; isopentenyl diphosphate from 1-deoxy-D-xylulose 5-phosphate: step 5/6. In terms of biological role, converts 2C-methyl-D-erythritol 2,4-cyclodiphosphate (ME-2,4cPP) into 1-hydroxy-2-methyl-2-(E)-butenyl 4-diphosphate. The chain is 4-hydroxy-3-methylbut-2-en-1-yl diphosphate synthase (flavodoxin) from Gluconobacter oxydans (strain 621H) (Gluconobacter suboxydans).